Consider the following 490-residue polypeptide: Phenylacetaldehyde synthase (490 aa).

L-phenylalanine is bound by residues proline 92, histidine 193, and histidine 308. An N6-(pyridoxal phosphate)lysine modification is found at lysine 309. Phenylalanine 338 lines the L-phenylalanine pocket.

The protein belongs to the group II decarboxylase family. Homodimer. The cofactor is pyridoxal 5'-phosphate. In terms of tissue distribution, expressed in roots, rosette leaves, stems, cauline leaves and flowers.

It catalyses the reaction L-phenylalanine + O2 + H2O + H(+) = 2-phenylacetaldehyde + H2O2 + NH4(+) + CO2. The catalysed reaction is L-dopa + O2 + H2O + H(+) = 3,4-dihydroxyphenylacetaldehyde + H2O2 + NH4(+) + CO2. Functionally, bifunctional enzyme that catalyzes the decarboxylation of L-phenylalanine to 2-phenylethylamine, which is then oxidized to form 2-phenylacetaldehyde, a constituent of floral scent. 2-phenylacetaldehyde is a precursor of 2-phenylethanol, another constituent of floral scent. Catalyzes both the decarboxylation and deamination of L-dopa to 3,4-dihydroxylphenylacetaldehyde (DHPAA). In Arabidopsis thaliana (Mouse-ear cress), this protein is Phenylacetaldehyde synthase.